Consider the following 185-residue polypeptide: CASP-like protein 5A1 (185 aa).

At Met1–Gly48 the chain is on the cytoplasmic side. Residues Leu49–Ile69 traverse the membrane as a helical segment. At Arg70–Ala76 the chain is on the extracellular side. A helical transmembrane segment spans residues Phe77–Ile97. Over Asp98 to Asp121 the chain is Cytoplasmic. A helical membrane pass occupies residues Gly122 to Ile142. Residues Gly143–Ala160 are Extracellular-facing. A helical membrane pass occupies residues Ile161 to Met181. The Cytoplasmic segment spans residues Leu182–Leu185.

It belongs to the Casparian strip membrane proteins (CASP) family. In terms of assembly, homodimer and heterodimers.

The protein localises to the cell membrane. This is CASP-like protein 5A1 from Pinus contorta (Shore pine).